The chain runs to 371 residues: Protein RecA (371 aa).

Position 75 to 82 (75 to 82 (GPESSGKT)) interacts with ATP. Residues 343–371 (KAKDEPIADEDQPIDVVPNFDDQDVEPQN) are disordered.

This sequence belongs to the RecA family.

Its subcellular location is the cytoplasm. In terms of biological role, can catalyze the hydrolysis of ATP in the presence of single-stranded DNA, the ATP-dependent uptake of single-stranded DNA by duplex DNA, and the ATP-dependent hybridization of homologous single-stranded DNAs. It interacts with LexA causing its activation and leading to its autocatalytic cleavage. The sequence is that of Protein RecA from Corynebacterium urealyticum (strain ATCC 43042 / DSM 7109).